The sequence spans 204 residues: Putative 3-methyladenine DNA glycosylase (204 aa).

It belongs to the DNA glycosylase MPG family.

This Mycobacterium sp. (strain KMS) protein is Putative 3-methyladenine DNA glycosylase.